The chain runs to 361 residues: Histidinol-phosphate aminotransferase (361 aa).

K220 bears the N6-(pyridoxal phosphate)lysine mark.

It belongs to the class-II pyridoxal-phosphate-dependent aminotransferase family. Histidinol-phosphate aminotransferase subfamily. As to quaternary structure, homodimer. Pyridoxal 5'-phosphate is required as a cofactor.

The catalysed reaction is L-histidinol phosphate + 2-oxoglutarate = 3-(imidazol-4-yl)-2-oxopropyl phosphate + L-glutamate. The protein operates within amino-acid biosynthesis; L-histidine biosynthesis; L-histidine from 5-phospho-alpha-D-ribose 1-diphosphate: step 7/9. The polypeptide is Histidinol-phosphate aminotransferase (Syntrophus aciditrophicus (strain SB)).